Here is a 123-residue protein sequence, read N- to C-terminus: UPF0102 protein VSAL_I2655 (123 aa).

Belongs to the UPF0102 family.

The sequence is that of UPF0102 protein VSAL_I2655 from Aliivibrio salmonicida (strain LFI1238) (Vibrio salmonicida (strain LFI1238)).